A 232-amino-acid polypeptide reads, in one-letter code: Enterobactin synthase component D (232 aa).

Positions 106, 108, and 150 each coordinate Mg(2+).

The protein belongs to the P-Pant transferase superfamily. EntD family. As to quaternary structure, entB, EntD, EntE, and EntF form a multienzyme complex called enterobactin synthase. It depends on Mg(2+) as a cofactor.

It is found in the membrane. It carries out the reaction apo-[aryl-carrier protein] + CoA = holo-[aryl-carrier protein] + adenosine 3',5'-bisphosphate + H(+). It catalyses the reaction apo-[peptidyl-carrier protein] + CoA = holo-[peptidyl-carrier protein] + adenosine 3',5'-bisphosphate + H(+). The protein operates within siderophore biosynthesis; enterobactin biosynthesis. In terms of biological role, involved in the biosynthesis of the siderophore enterobactin (enterochelin), which is a macrocyclic trimeric lactone of N-(2,3-dihydroxybenzoyl)-serine. The serine trilactone serves as a scaffolding for the three catechol functionalities that provide hexadentate coordination for the tightly ligated iron(2+) atoms. Plays an essential role in the assembly of the enterobactin by catalyzing the transfer of the 4'-phosphopantetheine (Ppant) moiety from coenzyme A to the apo-domains of both EntB (ArCP domain) and EntF (PCP domain) to yield their holo-forms which make them competent for the activation of 2,3-dihydroxybenzoate (DHB) and L-serine, respectively. This is Enterobactin synthase component D from Salmonella austin.